The primary structure comprises 324 residues: Probable nicotianamine synthase 4 (324 aa).

The protein belongs to the nicotianamine synthase (NAS)-like family.

The catalysed reaction is 3 S-adenosyl-L-methionine = nicotianamine + 3 S-methyl-5'-thioadenosine + 3 H(+). Synthesizes nicotianamine, a polyamine which serves as a sensor for the physiological iron status within the plant, and/or might be involved in the transport of iron. This Arabidopsis thaliana (Mouse-ear cress) protein is Probable nicotianamine synthase 4 (NAS4).